The sequence spans 268 residues: Small ribosomal subunit protein uS2 (268 aa).

This sequence belongs to the universal ribosomal protein uS2 family.

The protein is Small ribosomal subunit protein uS2 of Coprothermobacter proteolyticus (strain ATCC 35245 / DSM 5265 / OCM 4 / BT).